The sequence spans 178 residues: Large ribosomal subunit protein uL6 (178 aa).

Belongs to the universal ribosomal protein uL6 family. Part of the 50S ribosomal subunit.

This protein binds to the 23S rRNA, and is important in its secondary structure. It is located near the subunit interface in the base of the L7/L12 stalk, and near the tRNA binding site of the peptidyltransferase center. The polypeptide is Large ribosomal subunit protein uL6 (Francisella tularensis subsp. mediasiatica (strain FSC147)).